A 139-amino-acid polypeptide reads, in one-letter code: Nucleoside diphosphate kinase (139 aa).

6 residues coordinate ATP: K9, F57, R85, T91, R102, and N112. The active-site Pros-phosphohistidine intermediate is the H115.

This sequence belongs to the NDK family. As to quaternary structure, homotetramer. The cofactor is Mg(2+).

It localises to the cytoplasm. The catalysed reaction is a 2'-deoxyribonucleoside 5'-diphosphate + ATP = a 2'-deoxyribonucleoside 5'-triphosphate + ADP. The enzyme catalyses a ribonucleoside 5'-diphosphate + ATP = a ribonucleoside 5'-triphosphate + ADP. Its function is as follows. Major role in the synthesis of nucleoside triphosphates other than ATP. The ATP gamma phosphate is transferred to the NDP beta phosphate via a ping-pong mechanism, using a phosphorylated active-site intermediate. The protein is Nucleoside diphosphate kinase of Desulfosudis oleivorans (strain DSM 6200 / JCM 39069 / Hxd3) (Desulfococcus oleovorans).